We begin with the raw amino-acid sequence, 365 residues long: Succinyl-diaminopimelate desuccinylase (365 aa).

H65 contributes to the Zn(2+) binding site. The active site involves D67. D96 is a binding site for Zn(2+). The Proton acceptor role is filled by E126. 3 residues coordinate Zn(2+): E127, E155, and H340.

Belongs to the peptidase M20A family. DapE subfamily. As to quaternary structure, homodimer. The cofactor is Zn(2+). Co(2+) is required as a cofactor.

It catalyses the reaction N-succinyl-(2S,6S)-2,6-diaminopimelate + H2O = (2S,6S)-2,6-diaminopimelate + succinate. The protein operates within amino-acid biosynthesis; L-lysine biosynthesis via DAP pathway; LL-2,6-diaminopimelate from (S)-tetrahydrodipicolinate (succinylase route): step 3/3. Its function is as follows. Catalyzes the hydrolysis of N-succinyl-L,L-diaminopimelic acid (SDAP), forming succinate and LL-2,6-diaminopimelate (DAP), an intermediate involved in the bacterial biosynthesis of lysine and meso-diaminopimelic acid, an essential component of bacterial cell walls. This is Succinyl-diaminopimelate desuccinylase from Campylobacter jejuni subsp. jejuni serotype O:6 (strain 81116 / NCTC 11828).